The following is a 286-amino-acid chain: ATP synthase gamma chain (286 aa).

It belongs to the ATPase gamma chain family. In terms of assembly, F-type ATPases have 2 components, CF(1) - the catalytic core - and CF(0) - the membrane proton channel. CF(1) has five subunits: alpha(3), beta(3), gamma(1), delta(1), epsilon(1). CF(0) has three main subunits: a, b and c.

It localises to the cell inner membrane. Functionally, produces ATP from ADP in the presence of a proton gradient across the membrane. The gamma chain is believed to be important in regulating ATPase activity and the flow of protons through the CF(0) complex. In Pseudomonas fluorescens (strain SBW25), this protein is ATP synthase gamma chain.